A 651-amino-acid polypeptide reads, in one-letter code: Macrolide export ATP-binding/permease protein MacB (651 aa).

An ABC transporter domain is found at 2-239; the sequence is IEIVNVTKTY…PQMPQGGMEA (238 aa). 38–45 provides a ligand contact to ATP; sequence GASGSGKS. 4 helical membrane passes run 269–289, 532–552, 589–609, and 614–634; these read FLSV…MALG, IAAI…LVSV, IIGI…AGWA, and MFSV…FGLW.

The protein belongs to the ABC transporter superfamily. Macrolide exporter (TC 3.A.1.122) family. Homodimer.

It localises to the cell inner membrane. In terms of biological role, non-canonical ABC transporter that contains transmembrane domains (TMD), which form a pore in the inner membrane, and an ATP-binding domain (NBD), which is responsible for energy generation. Confers resistance against macrolides. The sequence is that of Macrolide export ATP-binding/permease protein MacB from Chlorobaculum tepidum (strain ATCC 49652 / DSM 12025 / NBRC 103806 / TLS) (Chlorobium tepidum).